A 256-amino-acid chain; its full sequence is (E)-benzylidenesuccinyl-CoA hydratase (256 aa).

The active-site Nucleophile is the glutamate 110. The active-site Proton acceptor is glutamate 130.

The protein belongs to the enoyl-CoA hydratase/isomerase family. As to quaternary structure, homotrimer.

The enzyme catalyses (2S)-[(R)-hydroxy(phenyl)methyl]succinyl-CoA = (E)-2-benzylidenesuccinyl-CoA + H2O. It participates in xenobiotic degradation; toluene degradation. Its function is as follows. Involved in an anaerobic toluene degradation pathway. Catalyzes the hydration of (E)-2-benzylidenesuccinyl-CoA to the corresponding alcohol intermediate, 2-(alpha-hydroxybenzyl)succinyl-CoA. Also accepts the N-acetylcysteamine (NAC) thioester of (E)-benzylidenesuccinate. This is (E)-benzylidenesuccinyl-CoA hydratase from Thauera aromatica.